A 22-amino-acid chain; its full sequence is Large ribosomal subunit protein bL32 (22 aa).

The segment at 1-22 (CVQQNKKSRSARDMXXSXDALE) is disordered. The span at 13–22 (DMXXSXDALE) shows a compositional bias: low complexity.

The protein belongs to the bacterial ribosomal protein bL32 family.

In Ectopseudomonas mendocina (Pseudomonas mendocina), this protein is Large ribosomal subunit protein bL32 (rpmF).